The chain runs to 868 residues: Alanine--tRNA ligase (868 aa).

Residues histidine 556, histidine 560, cysteine 666, and histidine 670 each coordinate Zn(2+).

The protein belongs to the class-II aminoacyl-tRNA synthetase family. It depends on Zn(2+) as a cofactor.

The protein resides in the cytoplasm. The enzyme catalyses tRNA(Ala) + L-alanine + ATP = L-alanyl-tRNA(Ala) + AMP + diphosphate. Functionally, catalyzes the attachment of alanine to tRNA(Ala) in a two-step reaction: alanine is first activated by ATP to form Ala-AMP and then transferred to the acceptor end of tRNA(Ala). Also edits incorrectly charged Ser-tRNA(Ala) and Gly-tRNA(Ala) via its editing domain. This is Alanine--tRNA ligase from Elusimicrobium minutum (strain Pei191).